Consider the following 142-residue polypeptide: Galactose-6-phosphate isomerase subunit LacA (142 aa).

Belongs to the LacAB/RpiB family. Heteromultimeric protein consisting of LacA and LacB.

The enzyme catalyses aldehydo-D-galactose 6-phosphate = keto-D-tagatose 6-phosphate. It participates in carbohydrate metabolism; D-galactose 6-phosphate degradation; D-tagatose 6-phosphate from D-galactose 6-phosphate: step 1/1. The protein is Galactose-6-phosphate isomerase subunit LacA of Staphylococcus aureus (strain JH9).